Reading from the N-terminus, the 272-residue chain is Phosphoribosylformylglycinamidine synthase subunit PurQ (272 aa).

Residues Val8–Lys272 form the Glutamine amidotransferase type-1 domain. Cys98 serves as the catalytic Nucleophile. Catalysis depends on residues His225, Glu227, and Glu235.

In terms of assembly, part of the FGAM synthase complex composed of 1 PurL, 1 PurQ and 2 PurS subunits.

It is found in the cytoplasm. It carries out the reaction N(2)-formyl-N(1)-(5-phospho-beta-D-ribosyl)glycinamide + L-glutamine + ATP + H2O = 2-formamido-N(1)-(5-O-phospho-beta-D-ribosyl)acetamidine + L-glutamate + ADP + phosphate + H(+). The catalysed reaction is L-glutamine + H2O = L-glutamate + NH4(+). Its pathway is purine metabolism; IMP biosynthesis via de novo pathway; 5-amino-1-(5-phospho-D-ribosyl)imidazole from N(2)-formyl-N(1)-(5-phospho-D-ribosyl)glycinamide: step 1/2. Part of the phosphoribosylformylglycinamidine synthase complex involved in the purines biosynthetic pathway. Catalyzes the ATP-dependent conversion of formylglycinamide ribonucleotide (FGAR) and glutamine to yield formylglycinamidine ribonucleotide (FGAM) and glutamate. The FGAM synthase complex is composed of three subunits. PurQ produces an ammonia molecule by converting glutamine to glutamate. PurL transfers the ammonia molecule to FGAR to form FGAM in an ATP-dependent manner. PurS interacts with PurQ and PurL and is thought to assist in the transfer of the ammonia molecule from PurQ to PurL. In Methanococcus maripaludis (strain DSM 14266 / JCM 13030 / NBRC 101832 / S2 / LL), this protein is Phosphoribosylformylglycinamidine synthase subunit PurQ.